A 550-amino-acid polypeptide reads, in one-letter code: Membrane protein of ER body 2 (550 aa).

Residues 46–199 (EFRSKAAATA…SSDSEEKSNL (154 aa)) form a disordered region. 2 stretches are compositionally biased toward low complexity: residues 80 to 105 (SVSE…SETG) and 112 to 121 (TGSNEENGNN). Polar residues predominate over residues 122-132 (WLESSSTNLPN). Residues 134-165 (ENKRQRNGEDCEIEEEEENNERSLSDSEEKSN) are a coiled coil. Residues 143-152 (DCEIEEEEEN) show a composition bias toward acidic residues. Composition is skewed to basic and acidic residues over residues 153-166 (NERS…KSNL) and 185-198 (KNER…EKSN). 4 helical membrane-spanning segments follow: residues 374–394 (STMN…IVLA), 425–445 (ILVA…VYAF), 458–478 (ISVF…KVYV), and 500–520 (SIVV…GEYI). The stretch at 393 to 418 (LAQNFQDLRNSSDQEKDRYEELLGRR) forms a coiled coil.

The protein belongs to the CCC1 family. In terms of assembly, interacts directly or indirectly with NAI2.

It localises to the endoplasmic reticulum membrane. In terms of biological role, may sequester excess cytosolic iron and manganese into endoplasmic reticulum to reduce metal ion toxicity. Not essential for the accumulation of ER body components, including PYK10. This Arabidopsis thaliana (Mouse-ear cress) protein is Membrane protein of ER body 2 (MEB2).